Consider the following 345-residue polypeptide: Biotin synthase (345 aa).

The Radical SAM core domain occupies 66 to 291; sequence PEVEIEGIIS…RTILRFAGGR (226 aa). Cysteine 81, cysteine 85, and cysteine 88 together coordinate [4Fe-4S] cluster. Positions 124, 157, 216, and 286 each coordinate [2Fe-2S] cluster.

This sequence belongs to the radical SAM superfamily. Biotin synthase family. As to quaternary structure, homodimer. [4Fe-4S] cluster is required as a cofactor. Requires [2Fe-2S] cluster as cofactor.

The catalysed reaction is (4R,5S)-dethiobiotin + (sulfur carrier)-SH + 2 reduced [2Fe-2S]-[ferredoxin] + 2 S-adenosyl-L-methionine = (sulfur carrier)-H + biotin + 2 5'-deoxyadenosine + 2 L-methionine + 2 oxidized [2Fe-2S]-[ferredoxin]. It participates in cofactor biosynthesis; biotin biosynthesis; biotin from 7,8-diaminononanoate: step 2/2. Catalyzes the conversion of dethiobiotin (DTB) to biotin by the insertion of a sulfur atom into dethiobiotin via a radical-based mechanism. This chain is Biotin synthase, found in Mycobacterium leprae (strain Br4923).